A 180-amino-acid polypeptide reads, in one-letter code: Probable nicotinate-nucleotide adenylyltransferase (180 aa).

It belongs to the NadD family.

It catalyses the reaction nicotinate beta-D-ribonucleotide + ATP + H(+) = deamido-NAD(+) + diphosphate. The protein operates within cofactor biosynthesis; NAD(+) biosynthesis; deamido-NAD(+) from nicotinate D-ribonucleotide: step 1/1. In terms of biological role, catalyzes the reversible adenylation of nicotinate mononucleotide (NaMN) to nicotinic acid adenine dinucleotide (NaAD). This is Probable nicotinate-nucleotide adenylyltransferase from Pelagibacter ubique (strain HTCC1062).